The chain runs to 66 residues: UPF0337 protein RPA4217 (66 aa).

The protein belongs to the UPF0337 (CsbD) family.

In Rhodopseudomonas palustris (strain ATCC BAA-98 / CGA009), this protein is UPF0337 protein RPA4217.